The sequence spans 177 residues: ATP synthase subunit delta (177 aa).

It belongs to the ATPase delta chain family. F-type ATPases have 2 components, F(1) - the catalytic core - and F(0) - the membrane proton channel. F(1) has five subunits: alpha(3), beta(3), gamma(1), delta(1), epsilon(1). F(0) has three main subunits: a(1), b(2) and c(10-14). The alpha and beta chains form an alternating ring which encloses part of the gamma chain. F(1) is attached to F(0) by a central stalk formed by the gamma and epsilon chains, while a peripheral stalk is formed by the delta and b chains.

Its subcellular location is the cell membrane. F(1)F(0) ATP synthase produces ATP from ADP in the presence of a proton or sodium gradient. F-type ATPases consist of two structural domains, F(1) containing the extramembraneous catalytic core and F(0) containing the membrane proton channel, linked together by a central stalk and a peripheral stalk. During catalysis, ATP synthesis in the catalytic domain of F(1) is coupled via a rotary mechanism of the central stalk subunits to proton translocation. Functionally, this protein is part of the stalk that links CF(0) to CF(1). It either transmits conformational changes from CF(0) to CF(1) or is implicated in proton conduction. The polypeptide is ATP synthase subunit delta (Carboxydothermus hydrogenoformans (strain ATCC BAA-161 / DSM 6008 / Z-2901)).